We begin with the raw amino-acid sequence, 125 residues long: Casein kinase I isoform alpha (125 aa).

The Protein kinase domain occupies 1–125; sequence GEEVAVKLES…LIDFGLAKKY (125 aa). Lys7 contributes to the ATP binding site. Asp97 acts as the Proton acceptor in catalysis.

It belongs to the protein kinase superfamily. CK1 Ser/Thr protein kinase family. Casein kinase I subfamily. As to quaternary structure, interacts with the Axin complex. Interacts with TUT1, leading to TUT1 phosphorylation. Interacts with FAM83A, FAM83B, FAM83C, FAM83D, FAM83E, FAM83F, FAM83G and FAM83H (via DUF1669). Interaction with FAM83H recruits CSNK1A1 to keratin filaments. Phosphorylated by MTOR in response to mitogenic stimulation, leading to its activation.

The protein localises to the cytoplasm. The protein resides in the cytoskeleton. Its subcellular location is the microtubule organizing center. It is found in the centrosome. It localises to the chromosome. The protein localises to the centromere. The protein resides in the kinetochore. Its subcellular location is the nucleus speckle. It is found in the cilium basal body. It localises to the spindle. It carries out the reaction L-seryl-[protein] + ATP = O-phospho-L-seryl-[protein] + ADP + H(+). The catalysed reaction is L-threonyl-[protein] + ATP = O-phospho-L-threonyl-[protein] + ADP + H(+). Casein kinases are operationally defined by their preferential utilization of acidic proteins such as caseins as substrates. It can phosphorylate a large number of proteins. Participates in Wnt signaling. Phosphorylates CTNNB1 at 'Ser-45'. May phosphorylate PER1 and PER2. May play a role in segregating chromosomes during mitosis. May play a role in keratin cytoskeleton disassembly and thereby, it may regulate epithelial cell migration. Acts as a positive regulator of mTORC1 and mTORC2 signaling in response to nutrients by mediating phosphorylation of DEPTOR inhibitor. Acts as an inhibitor of NLRP3 inflammasome assembly by mediating phosphorylation of NLRP3. The sequence is that of Casein kinase I isoform alpha (CSNK1A1) from Sus scrofa (Pig).